The following is a 614-amino-acid chain: Vitamin B12 transporter BtuB (614 aa).

Positions 1–20 are cleaved as a signal peptide; it reads MIKKASLLTACSVTAFSAWA. A TonB box motif is present at residues 26 to 33; the sequence is DTLVVTAI. Residues 38–152 form the TBDR plug domain; sequence PRSTVLAPTT…IGGVVNIITT (115 aa). Cyanocob(III)alamin is bound by residues Leu83, Ser85, Asn92, and 110 to 111; that span reads VS. Positions 155 to 614 constitute a TBDR beta-barrel domain; the sequence is EPGTEISAGW…EYTLSGSYTF (460 aa). Transmembrane regions (beta stranded) follow at residues 158–165, 169–178, and 184–195; these read TEISAGWG, YQNYDVSTQQ, and TRVTLLGDYAHT. The Ca(2+) site is built by Asp199, Gln211, Asp213, and Asp215. Transmembrane regions (beta stranded) follow at residues 217-227 and 232-248; these read FLSKTLYGALE and DAWS…NRTN. Positions 249 and 250 each coordinate Ca(2+). Ala251 lines the cyanocob(III)alamin pocket. A Ca(2+)-binding site is contributed by Asp261. 14 consecutive transmembrane segments (beta stranded) span residues 263-277, 279-296, 309-325, 328-337, 353-369, 371-381, 385-400, 403-417, 434-443, 449-458, 473-490, 494-509, 517-529, and 535-550; these read RKLY…LRYN, ELIK…KDYN, TLDE…NNVI, HGSIGAGVDW, YDQR…QQVG, FTFEGAARSDD, FGRH…WEFI, YRFI…KAPN, KSKQWEGAFE, VNWRISGYRN, YYNE…TANF, PLTH…ARNA, RRAK…QLDW, and DWGI…YDKD. Thr309 lines the cyanocob(III)alamin pocket. Residue Arg517 participates in cyanocob(III)alamin binding. Tyr551 is a binding site for cyanocob(III)alamin. 3 beta stranded membrane passes run 558–572, 585–596, and 602–614; these read TVKM…LAVA, IANLFDKDYETV, and AGRE…SYTF. Positions 597–614 match the TonB C-terminal box motif; it reads YGYQTAGREYTLSGSYTF.

This sequence belongs to the TonB-dependent receptor family. BtuB (TC 1.B.14.3.1) subfamily.

Its subcellular location is the cell outer membrane. Involved in the active translocation of vitamin B12 (cyanocobalamin) across the outer membrane to the periplasmic space. It derives its energy for transport by interacting with the trans-periplasmic membrane protein TonB. This chain is Vitamin B12 transporter BtuB, found in Shigella flexneri serotype 5b (strain 8401).